Here is a 714-residue protein sequence, read N- to C-terminus: Structure-specific endonuclease subunit SLX4 2 (714 aa).

Composition is skewed to basic and acidic residues over residues 1-14 (MSPE…EDNL) and 24-34 (IHEETLAEESH). 2 disordered regions span residues 1-114 (MSPE…EQQG) and 338-369 (SSGP…KTPQ). The segment covering 36–46 (QAIQRSISRLS) has biased composition (polar residues). The span at 79-92 (KTKKRKLKVSKPRK) shows a compositional bias: basic residues.

This sequence belongs to the SLX4 family. In terms of assembly, forms a heterodimer with SLX1. Phosphorylated in response to DNA damage.

The protein resides in the nucleus. Functionally, regulatory subunit of the SLX1-SLX4 structure-specific endonuclease that resolves DNA secondary structures generated during DNA repair and recombination. Has endonuclease activity towards branched DNA substrates, introducing single-strand cuts in duplex DNA close to junctions with ss-DNA. The polypeptide is Structure-specific endonuclease subunit SLX4 2 (Candida tropicalis (strain ATCC MYA-3404 / T1) (Yeast)).